The following is a 156-amino-acid chain: Arginine repressor (156 aa).

Belongs to the ArgR family.

It is found in the cytoplasm. It functions in the pathway amino-acid biosynthesis; L-arginine biosynthesis [regulation]. In terms of biological role, regulates arginine biosynthesis genes. In Shewanella frigidimarina (strain NCIMB 400), this protein is Arginine repressor.